Here is a 332-residue protein sequence, read N- to C-terminus: Glycerol-3-phosphate dehydrogenase [NAD(P)+] (332 aa).

3 residues coordinate NADPH: serine 15, tryptophan 16, and lysine 110. Positions 110, 137, and 139 each coordinate sn-glycerol 3-phosphate. Alanine 141 contacts NADPH. Residues lysine 192, aspartate 245, serine 255, arginine 256, and asparagine 257 each coordinate sn-glycerol 3-phosphate. Lysine 192 functions as the Proton acceptor in the catalytic mechanism. An NADPH-binding site is contributed by arginine 256. Glutamate 282 is an NADPH binding site.

This sequence belongs to the NAD-dependent glycerol-3-phosphate dehydrogenase family.

The protein localises to the cytoplasm. It carries out the reaction sn-glycerol 3-phosphate + NAD(+) = dihydroxyacetone phosphate + NADH + H(+). The enzyme catalyses sn-glycerol 3-phosphate + NADP(+) = dihydroxyacetone phosphate + NADPH + H(+). It functions in the pathway membrane lipid metabolism; glycerophospholipid metabolism. Catalyzes the reduction of the glycolytic intermediate dihydroxyacetone phosphate (DHAP) to sn-glycerol 3-phosphate (G3P), the key precursor for phospholipid synthesis. This chain is Glycerol-3-phosphate dehydrogenase [NAD(P)+], found in Coxiella burnetii (strain RSA 331 / Henzerling II).